We begin with the raw amino-acid sequence, 244 residues long: Ras-like protein family member 11B (244 aa).

The small GTPase-like stretch occupies residues Pro-19–Thr-242. Residues Gly-30–Thr-37, Asp-77–Val-81, and Asn-142–Asp-145 each bind GTP. Residues Ile-200–Asn-222 form a disordered region.

The protein belongs to the small GTPase superfamily. Ras family.

It carries out the reaction GTP + H2O = GDP + phosphate + H(+). The chain is Ras-like protein family member 11B from Danio rerio (Zebrafish).